The primary structure comprises 404 residues: MKLPIYLDYAATTPVDPRVAEKMFQYMTMDGIFGNPASRSHRYGWQAEEAVDVARNQVADLINADHREIVFTSGATESNNLAIKGVAHFYKKKGKHIITSKTEHKAVLDTCRQLEREGFEVTYLEPESNGIIPMARLEAAMRDDTILVSIMHVNNEIGVIHDIDAIGELCRSKGIIFHMDAAQSAGKLPIDVQATKVDLISISGHKMYGPKGIGALYVRRKPRIRLEAQMHGGGHERGMRSGTLPTHQIVGLGEASAIAKAEMATDNVRIAKLRDKLWNGIKHIEETYVNGDMNQRTSGSLNVSFNYVEGESLMMALKDLAVSSGSACTSASLEPSYVLRALGLNDEMAHSSIRFSIGRFTTEEEIDHAIEVITQSIDKLREMSPLWEMFKDGIDLNQVQWAHH.

Pyridoxal 5'-phosphate contacts are provided by residues 75 to 76 (AT), Asn155, Gln183, and 203 to 205 (SGH). Lys206 is subject to N6-(pyridoxal phosphate)lysine. Residue Thr243 coordinates pyridoxal 5'-phosphate. The Cysteine persulfide intermediate role is filled by Cys328. Cys328 is a binding site for [2Fe-2S] cluster.

The protein belongs to the class-V pyridoxal-phosphate-dependent aminotransferase family. NifS/IscS subfamily. As to quaternary structure, homodimer. Forms a heterotetramer with IscU, interacts with other sulfur acceptors. Requires pyridoxal 5'-phosphate as cofactor.

The protein localises to the cytoplasm. It carries out the reaction (sulfur carrier)-H + L-cysteine = (sulfur carrier)-SH + L-alanine. It functions in the pathway cofactor biosynthesis; iron-sulfur cluster biosynthesis. Its function is as follows. Master enzyme that delivers sulfur to a number of partners involved in Fe-S cluster assembly, tRNA modification or cofactor biosynthesis. Catalyzes the removal of elemental sulfur atoms from cysteine to produce alanine. Functions as a sulfur delivery protein for Fe-S cluster synthesis onto IscU, an Fe-S scaffold assembly protein, as well as other S acceptor proteins. The protein is Cysteine desulfurase IscS of Shewanella oneidensis (strain ATCC 700550 / JCM 31522 / CIP 106686 / LMG 19005 / NCIMB 14063 / MR-1).